Reading from the N-terminus, the 80-residue chain is ATP synthase subunit c (80 aa).

The next 2 helical transmembrane spans lie at 11–31 and 53–73; these read IAAA…IGIL and FFIV…LGLY.

It belongs to the ATPase C chain family. As to quaternary structure, F-type ATPases have 2 components, F(1) - the catalytic core - and F(0) - the membrane proton channel. F(1) has five subunits: alpha(3), beta(3), gamma(1), delta(1), epsilon(1). F(0) has three main subunits: a(1), b(2) and c(10-14). The alpha and beta chains form an alternating ring which encloses part of the gamma chain. F(1) is attached to F(0) by a central stalk formed by the gamma and epsilon chains, while a peripheral stalk is formed by the delta and b chains.

It localises to the cell inner membrane. Functionally, f(1)F(0) ATP synthase produces ATP from ADP in the presence of a proton or sodium gradient. F-type ATPases consist of two structural domains, F(1) containing the extramembraneous catalytic core and F(0) containing the membrane proton channel, linked together by a central stalk and a peripheral stalk. During catalysis, ATP synthesis in the catalytic domain of F(1) is coupled via a rotary mechanism of the central stalk subunits to proton translocation. In terms of biological role, key component of the F(0) channel; it plays a direct role in translocation across the membrane. A homomeric c-ring of between 10-14 subunits forms the central stalk rotor element with the F(1) delta and epsilon subunits. This chain is ATP synthase subunit c, found in Aeromonas hydrophila subsp. hydrophila (strain ATCC 7966 / DSM 30187 / BCRC 13018 / CCUG 14551 / JCM 1027 / KCTC 2358 / NCIMB 9240 / NCTC 8049).